The primary structure comprises 275 residues: MNTKEIVNKYEFKFNKNLGQNFLIDESVLEDIIEGAEINKEDTVIEIGPGVGTLTKELLERAKEVYSIELDGDLIPILQEELKEYNNFTLIHKDALKIDFNELMENKDSIKLVANLPYYVTTPIISRLLTEKCDFKSLTIMIQKEVAERINAEPNCKEYGSLTVLVQYYCNTKIIRKVSPNSFIPRPKVDSIVIKLDRLSEPRVRVKSQKLFFNVVRSSFNMRRKTLWNSLKSLNIDKESMENAFERAGIDPKRRGETLSIEEFGKLSDCIYDIL.

S-adenosyl-L-methionine is bound by residues asparagine 21, leucine 23, glycine 48, glutamate 69, aspartate 94, and asparagine 115.

Belongs to the class I-like SAM-binding methyltransferase superfamily. rRNA adenine N(6)-methyltransferase family. RsmA subfamily.

Its subcellular location is the cytoplasm. The enzyme catalyses adenosine(1518)/adenosine(1519) in 16S rRNA + 4 S-adenosyl-L-methionine = N(6)-dimethyladenosine(1518)/N(6)-dimethyladenosine(1519) in 16S rRNA + 4 S-adenosyl-L-homocysteine + 4 H(+). In terms of biological role, specifically dimethylates two adjacent adenosines (A1518 and A1519) in the loop of a conserved hairpin near the 3'-end of 16S rRNA in the 30S particle. May play a critical role in biogenesis of 30S subunits. The chain is Ribosomal RNA small subunit methyltransferase A from Clostridium botulinum (strain ATCC 19397 / Type A).